An 885-amino-acid chain; its full sequence is MSSARSHVSMQNKYDRVVLLVDMDCFFCQVEEKQHPEYRNRPLAVVQYNPWRGGGIIAVNYAARAKGVTRHMRGDEAKDLCPEIVLCQVPNIREKADTSKYRDAGKEVANVLQRFTQLLERASVDEAYLDITETVNHRMQQMQSGAFALQPQELVNTFAVGYPSIGDYVNKITNRFANPYMDDERYQMSYDQNDLPAVRQSDIRLLIGASVAGEVRAAVKKETGYECSAGIAHNKILAKLAAGMNKPNKQTILPLTETASLFDSLPVGKIKGLGGKFGEVVCETLGIKFMGQVVKFSEVDLQRKFDEKNGTWLFNISRGIDLEAVTPRFYSKSIGCCKKFPGRNNITGLKTLQHWLGELSSEINDRLEKDFIENNRRAKHMVVQYVQDIDGEEVASSRSTALRDYDQESIVRLSLDLIKANTKTFLRPGSESALNNAIKFLGISVGKFETVSSGQNKLQEMFANQAAKKRRVSGDEPGQLPKVEMEKKQKQTDEFKMKSFFANYLQGAKKEDAKADGISANPLAAAAGAPNKNFVEEYKHKLHAAVRTEGTVLTSTPAEFKESFFSQYLKQQKKTGQQGSVTSREDSLDVQELAEELDAIEADNSKDFEEDTEEETELTSDTHMSKPEGQSSDAGQEQDPNTLNDSTGNDLYVETGIVPPTLTEDELKPSTSKRKFDEIESSVSNYKECYVEFAVPNLRTDILPTIKCDQCGANIPDEVKSLQTHRDHHFAQELSRTLRSTEREERTQSRQKISLKPTPPKKSKKTAGSGSSSYSTAPPSNSITKFFRAKPTQEQAPSDPQMNQCPECKAFIKCVDMPEHLDYHVARNLQRELNQQDLRTRTAALNKEKISPVQPKKQSQKKLNSTISASSSGTKTIAQFFSQSN.

The UmuC domain occupies 18 to 274; the sequence is VLLVDMDCFF…LPVGKIKGLG (257 aa). 2 residues coordinate Mg(2+): D22 and M23. Positions 22 and 23 each coordinate Mn(2+). R70 is an a 2'-deoxyribonucleoside 5'-triphosphate binding site. Mg(2+) is bound by residues D125 and E126. Mn(2+)-binding residues include D125 and E126. E126 is a catalytic residue. Disordered regions lie at residues 599 to 653 and 658 to 677; these read AIEA…DLYV and VPPTLTEDELKPSTSKRKFD. A compositionally biased stretch (acidic residues) spans 608 to 618; sequence FEEDTEEETEL. Residues 628 to 649 are compositionally biased toward polar residues; that stretch reads EGQSSDAGQEQDPNTLNDSTGN. The segment at 701–737 adopts a UBZ3-type 1 zinc-finger fold; that stretch reads DILPTIKCDQCGANIPDEVKSLQTHRDHHFAQELSRT. Zn(2+) is bound by residues C708, C711, H725, and H729. The segment at 722–783 is disordered; the sequence is LQTHRDHHFA…YSTAPPSNSI (62 aa). Basic and acidic residues predominate over residues 739 to 748; the sequence is RSTEREERTQ. The span at 766–780 shows a compositional bias: low complexity; it reads TAGSGSSSYSTAPPS. The segment at 798-832 adopts a UBZ3-type 2 zinc-finger fold; the sequence is SDPQMNQCPECKAFIKCVDMPEHLDYHVARNLQRE. 4 residues coordinate Zn(2+): C805, C808, H820, and H824. Residues 846–870 are disordered; sequence NKEKISPVQPKKQSQKKLNSTISAS.

It belongs to the DNA polymerase type-Y family. As to quaternary structure, interacts (via C-terminus) with nopo. Mg(2+) serves as cofactor. Requires Mn(2+) as cofactor. Ubiquitination enhanced by nopo. As to expression, expressed in ovaries and testes.

The protein localises to the nucleus. The enzyme catalyses DNA(n) + a 2'-deoxyribonucleoside 5'-triphosphate = DNA(n+1) + diphosphate. The enzyme in complex with the DNA substrate binds a third divalent metal cation. This binding is essential for catalyzing the DNA synthesis. Its function is as follows. DNA polymerase specifically involved in the DNA repair by translesion synthesis (TLS). Plays an important role in translesion synthesis, where the normal high-fidelity DNA polymerases cannot proceed and DNA synthesis stalls. Inserts one or 2 nucleotide(s) opposite the lesion. During homologous recombination (HR) repair, has a overlapping role with the error-prone translesion polymerase PolZ1/DNApol-zeta to initiate repair synthesis that is completed by end joining or another polymerase that can bind and reinitiate synthesis. Particularly important for the repair of UV-induced pyrimidine dimers and for hydroxyurea (HU)-induced DNA damage. Although inserts the correct base, may cause base transitions and transversions depending upon the context. Forms a Schiff base with 5'-deoxyribose phosphate at abasic sites, but does not have any lyase activity, preventing the release of the 5'-deoxyribose phosphate (5'-dRP) residue. This covalent trapping of the enzyme by the 5'-dRP residue inhibits its DNA synthetic activity during base excision repair, thereby avoiding high incidence of mutagenesis. The protein is DNA polymerase eta of Drosophila melanogaster (Fruit fly).